Reading from the N-terminus, the 165-residue chain is Urease accessory protein UreE (165 aa).

The interval 137 to 156 (EAGAYQSAPHGHSHAHGHDH) is disordered.

Belongs to the UreE family.

It is found in the cytoplasm. Functionally, involved in urease metallocenter assembly. Binds nickel. Probably functions as a nickel donor during metallocenter assembly. The protein is Urease accessory protein UreE of Pseudomonas putida (strain GB-1).